The primary structure comprises 199 residues: Charged multivesicular body protein 1b (199 aa).

Positions 26-48 form a coiled coil; it reads DKEEKAEKAKIKKAIQKGNMEVA. The interaction with IST1 stretch occupies residues 132–156; sequence MEDTMSSTTTLTTPQGQVDMLLQEM. Positions 167 to 199 are disordered; it reads ELPQGQTGSVGTSVASAEQDELSQRLARLRDQV. Positions 170–182 are enriched in polar residues; sequence QGQTGSVGTSVAS. Residues 174-199 are interaction with SPAST; it reads GSVGTSVASAEQDELSQRLARLRDQV. Positions 178 to 199 form a coiled coil; sequence TSVASAEQDELSQRLARLRDQV. Residues 180-196 form an interaction with VPS4A, MITD1 and STAMBP region; that stretch reads VASAEQDELSQRLARLR. An interaction with VTA1 region spans residues 180 to 199; that stretch reads VASAEQDELSQRLARLRDQV. An interaction with VPS4B region spans residues 183-199; that stretch reads AEQDELSQRLARLRDQV. The short motif at 186–196 is the MIT-interacting motif element; that stretch reads DELSQRLARLR.

Belongs to the SNF7 family. Probable peripherally associated component of the endosomal sorting required for transport complex III (ESCRT-III). ESCRT-III components are thought to multimerize to form a flat lattice on the perimeter membrane of the endosome. Several assembly forms of ESCRT-III may exist that interact and act sequentially. Interacts with CHMP1A. Interacts with VTA1; the interaction probably involves the open conformation of CHMP1B. Interacts with CHMP2A. Interacts with VPS4A; the interaction is direct. Interacts with VPS4B; the interaction is direct. Interacts with SPAST (via MIT domain); the interaction is direct. Interacts with IST1. Interacts with MITD1. Interacts with STAMBP.

Its subcellular location is the cytoplasm. It localises to the cytosol. It is found in the endosome. The protein localises to the late endosome membrane. In terms of biological role, probable peripherally associated component of the endosomal sorting required for transport complex III (ESCRT-III) which is involved in multivesicular bodies (MVBs) formation and sorting of endosomal cargo proteins into MVBs. MVBs contain intraluminal vesicles (ILVs) that are generated by invagination and scission from the limiting membrane of the endosome and mostly are delivered to lysosomes enabling degradation of membrane proteins, such as stimulated growth factor receptors, lysosomal enzymes and lipids. The MVB pathway appears to require the sequential function of ESCRT-O, -I,-II and -III complexes. ESCRT-III proteins mostly dissociate from the invaginating membrane before the ILV is released. The ESCRT machinery also functions in topologically equivalent membrane fission events, such as the terminal stages of cytokinesis and the budding of enveloped viruses (lentiviruses). ESCRT-III proteins are believed to mediate the necessary vesicle extrusion and/or membrane fission activities, possibly in conjunction with the AAA ATPase VPS4. Involved in cytokinesis. Involved in recruiting VPS4A and/or VPS4B and SPAST to the midbody of dividing cells. This chain is Charged multivesicular body protein 1b (CHMP1B), found in Bos taurus (Bovine).